Consider the following 446-residue polypeptide: Mannosyltransferase KTR6 (446 aa).

Residues 1–8 (MHVLLSKK) lie on the Cytoplasmic side of the membrane. A helical; Signal-anchor for type II membrane protein transmembrane segment spans residues 9–29 (IARFLLISFVFVLALMVTINH). The segment at 30–114 (PKTKQMSEQY…MVPSYINHRG (85 aa)) is stem region. Topologically, residues 30–446 (PKTKQMSEQY…DKPEGWDRLP (417 aa)) are lumenal. N-linked (GlcNAc...) asparagine glycans are attached at residues N82 and N98. A catalytic region spans residues 115–446 (SPPKACFVSL…DKPEGWDRLP (332 aa)). Residue E334 is the Nucleophile of the active site.

Belongs to the glycosyltransferase 15 family.

The protein resides in the membrane. Its pathway is protein modification; protein glycosylation. Functionally, glycosyltransferase that transfers an alpha-D-mannosyl residue from GDP-mannose into lipid-linked oligosaccharide, forming an alpha-(1-&gt;2)-D-mannosyl-D-mannose linkage. Required for addition of mannosylphosphate in yeast mannan. Recognizes any oligosaccharides with at least one alpha-1,2-linked mannobiose unit. The sequence is that of Mannosyltransferase KTR6 (KTR6) from Saccharomyces cerevisiae (strain ATCC 204508 / S288c) (Baker's yeast).